The chain runs to 310 residues: MRFRGLDLNLLVALDALMTERQLTAAARRINLSQPAMSAAIARLRNYFHDDLFVMQGRELILTPRAEALAPAVRDTLLHIQLSVIAWDPIKPAESDRRFRIILSDFMTLIFMEKVIKRIAREAPRVTFELLPLDDDPDELLRRGDVDFLILPDLLMPNIHPKAKLFDETLVCVGCPMNKQLEDRLSMEKFMSMGHVAAKFGRLMKPSVEQWLLLEHGFRRRIELVVPGFTLIPPLLVGTDRIATLPMRLVKHFEQTIPLKIVEHPLPPLHFPLAVQWPALHNTDPGNIWMREIMFDEASRMEASSETSAV.

An HTH lysR-type domain is found at L6–T63. The H-T-H motif DNA-binding region spans L23–A42.

It belongs to the LysR transcriptional regulatory family.

NodD regulates the expression of the nodABCFE genes which encode other nodulation proteins. NodD is also a negative regulator of its own expression. Binds flavonoids as inducers. The sequence is that of Nodulation protein D 1 (nodD1) from Neorhizobium galegae (Rhizobium galegae).